Reading from the N-terminus, the 185-residue chain is Elongation factor P (185 aa).

This sequence belongs to the elongation factor P family.

Its subcellular location is the cytoplasm. Its pathway is protein biosynthesis; polypeptide chain elongation. Involved in peptide bond synthesis. Stimulates efficient translation and peptide-bond synthesis on native or reconstituted 70S ribosomes in vitro. Probably functions indirectly by altering the affinity of the ribosome for aminoacyl-tRNA, thus increasing their reactivity as acceptors for peptidyl transferase. The chain is Elongation factor P from Burkholderia lata (strain ATCC 17760 / DSM 23089 / LMG 22485 / NCIMB 9086 / R18194 / 383).